We begin with the raw amino-acid sequence, 710 residues long: Solute carrier family 15 member 1 (710 aa).

A helical membrane pass occupies residues 1 to 21 (MGMSKSRGCFGYPLSIFFIVV). Residues 22 to 53 (NEFCERFSYYGMRALLVLYFRNFLGWDDDLST) lie on the Extracellular side of the membrane. The helical transmembrane segment at 54–74 (AIYHTFVALCYLTPILGALIA) threads the bilayer. The Cytoplasmic segment spans residues 75–82 (DSWLGKFK). The chain crosses the membrane as a helical span at residues 83-103 (TIVSLSIVYTIGQAVISVSSI). The Extracellular portion of the chain corresponds to 104–118 (NDLTDHDHDGSPNNL). The chain crosses the membrane as a helical span at residues 119–139 (PLHVALSMIGLALIALGTGGI). Over 140–161 (KPCVSAFGGDQFEEGQEKQRNR) the chain is Cytoplasmic. Residues 162–182 (FFSIFYLAINAGSLLSTIITP) traverse the membrane as a helical segment. Residues 183-198 (ILRVQQCGIHSQQACY) lie on the Extracellular side of the membrane. The chain crosses the membrane as a helical span at residues 199-219 (PLAFGVPAALMAVALIVFVLG). The Cytoplasmic portion of the chain corresponds to 220-276 (SGMYKKFQPQGNIMGKVAKCIRFAIKNRFRHRSKAFPKRNHWLDWAKEKYDERLISQ). The helical transmembrane segment at 277 to 297 (IKIMTKVMFLYIPLPMFWALF) threads the bilayer. The Extracellular segment spans residues 298 to 327 (DQQGSRWTLQATTMTGKIGTIEIQPDQMQT). Residues 328 to 348 (VNAILIVIMVPIVDAVVYPLI) traverse the membrane as a helical segment. The Cytoplasmic segment spans residues 349 to 361 (AKCGFNFTSLKKM). A helical membrane pass occupies residues 362–382 (TVGMFLASMAFVVAAIVQVEI). Residues 383 to 586 (DKTLPVFPSG…PPNTVNMALQ (204 aa)) lie on the Extracellular side of the membrane. An extracellular domain (ECD) region spans residues 383–586 (DKTLPVFPSG…PPNTVNMALQ (204 aa)). N-linked (GlcNAc...) asparagine glycosylation is found at Asn415, Asn439, Asn510, Asn532, and Asn539. Residues 587–607 (IPQYFLLTCGEVVFSVTGLEF) form a helical membrane-spanning segment. Residues 608–621 (SYSQAPSNMKSVLQ) lie on the Cytoplasmic side of the membrane. A helical transmembrane segment spans residues 622–642 (AGWLLTVAIGNIIVLIVAEAG). Topologically, residues 643 to 647 (HFDKQ) are extracellular. The chain crosses the membrane as a helical span at residues 648–668 (WAEYVLFASLLLVVCIIFAIM). The Cytoplasmic portion of the chain corresponds to 669 to 710 (ARFYTYINPAEIEAQFDEDEKKKGVGKENPYSSLEPVSQTNM). Residues 687-710 (DEKKKGVGKENPYSSLEPVSQTNM) form a disordered region. Residues 698–710 (PYSSLEPVSQTNM) show a composition bias toward polar residues.

Belongs to the major facilitator superfamily. Proton-dependent oligopeptide transporter (POT/PTR) (TC 2.A.17) family. Interacts (via extracellular domain region) with trypsin. In terms of tissue distribution, highly expressed in small intestine. As to expression, expression is restricted to pinealocytes.

Its subcellular location is the apical cell membrane. It catalyses the reaction a dipeptide(out) + H(+)(out) = a dipeptide(in) + H(+)(in). The enzyme catalyses an L-amino acid tripeptide(out) + H(+)(out) = an L-amino acid tripeptide(in) + H(+)(in). The catalysed reaction is L-alanyl-L-lysine(out) + H(+)(out) = L-alanyl-L-lysine(in) + H(+)(in). It carries out the reaction L-alanyl-L-proline(out) + H(+)(out) = L-alanyl-L-proline(in) + H(+)(in). It catalyses the reaction L-alanyl-L-valine(out) + H(+)(out) = L-alanyl-L-valine(in) + H(+)(in). The enzyme catalyses carnosine(out) + H(+)(out) = carnosine(in) + H(+)(in). The catalysed reaction is glycyl-L-glutamine(out) + H(+)(out) = glycyl-L-glutamine(in) + H(+)(in). It carries out the reaction glycyl-L-leucine(out) + H(+)(out) = glycyl-L-leucine(in) + H(+)(in). It catalyses the reaction glycyl-L-proline(out) + H(+)(out) = glycyl-L-proline(in) + H(+)(in). The enzyme catalyses glycyl-sarcosine(out) + H(+)(out) = glycyl-sarcosine(in) + H(+)(in). The catalysed reaction is L-leucyl-L-leucine(out) + H(+)(out) = L-leucyl-L-leucine(in) + H(+)(in). It carries out the reaction L-leucyl-L-proline(out) + H(+)(out) = L-leucyl-L-proline(in) + H(+)(in). It catalyses the reaction L-phenylalanyl-L-leucine(out) + H(+)(out) = L-phenylalanyl-L-leucine(in) + H(+)(in). The enzyme catalyses L-phenylalanyl-L-phenylalanine(out) + H(+)(out) = L-phenylalanyl-L-phenylalanine(in) + H(+)(in). The catalysed reaction is L-lysyl-glycine(out) + H(+)(out) = L-lysyl-glycine(in) + H(+)(in). It carries out the reaction L-tyrosylglycine(out) + H(+)(out) = L-tyrosylglycine(in) + H(+)(in). It catalyses the reaction L-alanyl-L-aspartate(out) + 2 H(+)(out) = L-alanyl-L-aspartate(in) + 2 H(+)(in). The enzyme catalyses L-aspartyl-glycine(out) + 2 H(+)(out) = L-aspartyl-glycine(in) + 2 H(+)(in). The catalysed reaction is glycyl-L-aspartate(out) + 2 H(+)(out) = glycyl-L-aspartate(in) + 2 H(+)(in). It carries out the reaction glycyl-L-glutamate(out) + 2 H(+)(out) = glycyl-L-glutamate(in) + 2 H(+)(in). It catalyses the reaction L-alanyl-L-leucyl-L-alanine(out) + H(+)(out) = L-alanyl-L-leucyl-L-alanine(in) + H(+)(in). The enzyme catalyses L-alanyl-L-prolylglycine(out) + H(+)(out) = L-alanyl-L-prolylglycine(in) + H(+)(in). The catalysed reaction is glycylglycyl-L-isoleucine(out) + H(+)(out) = glycylglycyl-L-isoleucine(in) + H(+)(in). It carries out the reaction glycylglycyl-L-proline(out) + H(+)(out) = glycylglycyl-L-proline(in) + H(+)(in). It catalyses the reaction L-methionyl-L-phenylalanyl-L-methionine(out) + H(+)(out) = L-methionyl-L-phenylalanyl-L-methionine(in) + H(+)(in). The enzyme catalyses N-acetyl-D-muramoyl-L-alanyl-D-isoglutamine(out) + 2 H(+)(out) = N-acetyl-D-muramoyl-L-alanyl-D-isoglutamine(in) + 2 H(+)(in). The catalysed reaction is N(alpha)-formyl-L-methionyl-L-leucyl-L-phenylalanine(out) + 2 H(+)(out) = N(alpha)-formyl-L-methionyl-L-leucyl-L-phenylalanine(in) + 2 H(+)(in). Functionally, electrogenic proton-coupled amino-acid transporter that transports oligopeptides of 2 to 4 amino acids with a preference for dipeptides. Transports neutral and monovalently charged peptides with a proton to peptide stoichiometry of 1:1 or 2:1. Primarily responsible for the absorption of dietary di- and tripeptides from the small intestinal lumen. Mediates transepithelial transport of muramyl and N-formylated bacterial dipeptides contributing to recognition of pathogenic bacteria by the mucosal immune system. The protein is Solute carrier family 15 member 1 (Slc15a1) of Rattus norvegicus (Rat).